The following is a 238-amino-acid chain: Ribitol-5-phosphate cytidylyltransferase 2 (238 aa).

CTP contacts are provided by residues 7 to 10 (LAGG) and 81 to 87 (GTDRNET).

Belongs to the IspD/TarI cytidylyltransferase family. TarI subfamily.

The enzyme catalyses D-ribitol 5-phosphate + CTP + H(+) = CDP-L-ribitol + diphosphate. The protein operates within cell wall biogenesis; poly(ribitol phosphate) teichoic acid biosynthesis. In terms of biological role, catalyzes the transfer of the cytidylyl group of CTP to D-ribitol 5-phosphate. The protein is Ribitol-5-phosphate cytidylyltransferase 2 of Staphylococcus aureus (strain MSSA476).